Consider the following 796-residue polypeptide: Cadherin-11 (796 aa).

The first 24 residues, 1–24, serve as a signal peptide directing secretion; it reads MKENYCLQAALVCLSMLYHSQAFA. A propeptide spanning residues 25 to 53 is cleaved from the precursor; that stretch reads LERRSHLHPSFHGHHEKGKEGQVLQRSKR. Cadherin domains are found at residues 54 to 159, 160 to 268, 269 to 383, 384 to 486, and 487 to 612; these read GWVW…PPEF, LHEI…PPKF, PQSV…PPMF, LAPS…DNAP, and KFAA…YILN. Residues 54–617 are Extracellular-facing; sequence GWVWNQFFVI…AYILNAGLST (564 aa). Asparagine 455 and asparagine 540 each carry an N-linked (GlcNAc...) asparagine glycan. A helical membrane pass occupies residues 618 to 640; that stretch reads GALIAILACIVILLVIVVLFVTL. Residues 641–796 are Cytoplasmic-facing; it reads RRQKKEPLIV…GSKDTFDDDS (156 aa). At serine 788 the chain carries Phosphoserine. Threonine 791 is modified (phosphothreonine).

In terms of assembly, interacts with PCDH8. As to expression, selectively expressed in osteoblastic cell lines, precursor cell lines of osteoblasts, and primary osteoblastic cells from calvaria, as well as in lung, testis, and brain tissues at low levels.

It is found in the cell membrane. In terms of biological role, cadherins are calcium-dependent cell adhesion proteins. They preferentially interact with themselves in a homophilic manner in connecting cells; cadherins may thus contribute to the sorting of heterogeneous cell types. Required for proper focal adhesion assembly. Involved in the regulation of cell migration. The chain is Cadherin-11 (Cdh11) from Mus musculus (Mouse).